The following is a 420-amino-acid chain: MERRYLKNPFQDFIGGENTAFASDEEHIKNLICTYVDTILEHCHPNSDDEDDRGDLYVGNAGIAFMFWKLASCEQTRDLYPPALQHASAFIRNAKANAERFKKRSAERYSFLCGNAGIYAVSAAISQAVKDTEELSNDLANFKSGIPSSKEFIHTKNGCDEVLVGRAGYLSGCYWLNDVLPDKKITDDDLISICQLIVTSGREYSKMNNSPLPLMFQYHGTEYLGAAHGLCAILHMLLDSPWFRTVPISAPAAELREIKRSIDYFLVLQDAEGNFPVALEDLRSGRDKRLVHWCHGAPGAVYMLAKAYLIFKEEKYLTSLRRSADLVWKKGFLRKGPGICHGVAGNGYVFLLLFRLTNEMKYLYRAHKFMELLTNSEFKQRARIPDNPHSLYEGVAGTVCFLVDILEPEQAYFPFMDVFH.

The protein belongs to the LanC-like protein family.

In Drosophila pseudoobscura pseudoobscura (Fruit fly), this protein is LanC-like protein 3 homolog.